A 191-amino-acid polypeptide reads, in one-letter code: Phosphoheptose isomerase (191 aa).

The SIS domain maps to I37–E191. Substrate is bound at residue N52–G54. Zn(2+) contacts are provided by H61 and E65. Substrate-binding positions include E65, N93 to D94, S119 to S121, S124, and Q172. Residues Q172 and H180 each contribute to the Zn(2+) site.

Belongs to the SIS family. GmhA subfamily. Homotetramer. Requires Zn(2+) as cofactor.

The protein resides in the cytoplasm. The catalysed reaction is 2 D-sedoheptulose 7-phosphate = D-glycero-alpha-D-manno-heptose 7-phosphate + D-glycero-beta-D-manno-heptose 7-phosphate. Its pathway is carbohydrate biosynthesis; D-glycero-D-manno-heptose 7-phosphate biosynthesis; D-glycero-alpha-D-manno-heptose 7-phosphate and D-glycero-beta-D-manno-heptose 7-phosphate from sedoheptulose 7-phosphate: step 1/1. The protein operates within bacterial outer membrane biogenesis; LPS core biosynthesis. In terms of biological role, catalyzes the isomerization of sedoheptulose 7-phosphate in D-glycero-D-manno-heptose 7-phosphate. The chain is Phosphoheptose isomerase from Vibrio parahaemolyticus serotype O3:K6 (strain RIMD 2210633).